The following is a 192-amino-acid chain: Thymidine kinase (192 aa).

Residues 9–16 and 87–90 contribute to the ATP site; these read SAMNAGKS and DECQ. Catalysis depends on Glu88, which acts as the Proton acceptor. The Zn(2+) site is built by Cys145, Cys147, Cys182, and His185.

The protein belongs to the thymidine kinase family. Homotetramer.

It localises to the cytoplasm. The catalysed reaction is thymidine + ATP = dTMP + ADP + H(+). The protein is Thymidine kinase of Vibrio vulnificus (strain CMCP6).